Consider the following 762-residue polypeptide: ABC-type oligopeptide transporter ABCB9 (762 aa).

The next 8 membrane-spanning stretches (helical) occupy residues 7-27 (VVVT…IYAF), 47-67 (VLDL…ATIG), 84-104 (LVIT…LLLF), 116-136 (FWAL…LWGL), 181-201 (VAFL…ETFL), 221-241 (FTTA…AAGI), 315-335 (VFMF…FPII), and 412-432 (SGLT…HLVI). Residues 184 to 467 (LVAASFFLIV…VGSVYSGLMQ (284 aa)) form the ABC transmembrane type-1 domain. An ABC transporter domain is found at 500 to 736 (VDFENVTFTY…GGLYAKLVQR (237 aa)). 535-542 (GPSGSGKS) serves as a coordination point for ATP.

It belongs to the ABC transporter superfamily. ABCB family. MHC peptide exporter (TC 3.A.1.209) subfamily. As to quaternary structure, homodimer. Interacts (via TMD0 region) with LAMP1; this interaction strongly stabilizes ABCB9 and protects ABCB9 against lysosomal degradation. Interacts (via TMD0 region) with LAMP2 (isoform LAMP-2B). Interacts (via TMD0) with YIF1B; this interaction allows (but is not essential) the ER-to-Golgi trafficking and strongly depends on a salt bridge within TMD0. As to expression, highly expressed in testis, particularly in the Sertoli cells of the seminiferous tubules, and at moderate levels in brain and spinal cord.

Its subcellular location is the lysosome membrane. It carries out the reaction a [oligopeptide](in) + ATP + H2O = a [oligopeptide](out) + ADP + phosphate + H(+). ATP-dependent low-affinity peptide transporter which translocates a broad spectrum of peptides from the cytosol to the lysosomal lumen for degradation. Displays a broad peptide length specificity from 6-mer up to at least 59-mer peptides with an optimum of 23-mers. Binds and transports smaller and larger peptides with the same affinity. Favors positively charged, aromatic or hydrophobic residues in the N- and C-terminal positions whereas negatively charged residues as well as asparagine and methionine are not favored. The polypeptide is ABC-type oligopeptide transporter ABCB9 (Mus musculus (Mouse)).